The primary structure comprises 95 residues: Large ribosomal subunit protein uL23 (95 aa).

It belongs to the universal ribosomal protein uL23 family. Part of the 50S ribosomal subunit. Contacts protein L29, and trigger factor when it is bound to the ribosome.

Its function is as follows. One of the early assembly proteins it binds 23S rRNA. One of the proteins that surrounds the polypeptide exit tunnel on the outside of the ribosome. Forms the main docking site for trigger factor binding to the ribosome. This Pelotomaculum thermopropionicum (strain DSM 13744 / JCM 10971 / SI) protein is Large ribosomal subunit protein uL23.